The primary structure comprises 36 residues: Photosystem I reaction center subunit VIII (36 aa).

Residues 9–29 (IFVPLVGLVFPAVAMASLFLY) form a helical membrane-spanning segment.

This sequence belongs to the PsaI family.

Its subcellular location is the plastid. The protein localises to the chloroplast thylakoid membrane. Its function is as follows. May help in the organization of the PsaL subunit. In Ostreococcus tauri, this protein is Photosystem I reaction center subunit VIII.